A 139-amino-acid polypeptide reads, in one-letter code: Large ribosomal subunit protein uL22 (139 aa).

Positions 1-21 (MTAPEQTYRNKKQRKQQHKLR) are disordered. A compositionally biased stretch (basic residues) spans 9–21 (RNKKQRKQQHKLR).

This sequence belongs to the universal ribosomal protein uL22 family. Part of the 50S ribosomal subunit.

Functionally, this protein binds specifically to 23S rRNA; its binding is stimulated by other ribosomal proteins, e.g. L4, L17, and L20. It is important during the early stages of 50S assembly. It makes multiple contacts with different domains of the 23S rRNA in the assembled 50S subunit and ribosome. In terms of biological role, the globular domain of the protein is located near the polypeptide exit tunnel on the outside of the subunit, while an extended beta-hairpin is found that lines the wall of the exit tunnel in the center of the 70S ribosome. This chain is Large ribosomal subunit protein uL22, found in Deinococcus geothermalis (strain DSM 11300 / CIP 105573 / AG-3a).